The primary structure comprises 397 residues: ORC1-type DNA replication protein 8 (397 aa).

ATP-binding positions include 61–65 (VGKTA), Y211, and R223.

It belongs to the CDC6/cdc18 family.

In terms of biological role, involved in regulation of DNA replication. The protein is ORC1-type DNA replication protein 8 (orc8) of Halobacterium salinarum (strain ATCC 700922 / JCM 11081 / NRC-1) (Halobacterium halobium).